The sequence spans 360 residues: Phospho-N-acetylmuramoyl-pentapeptide-transferase (360 aa).

10 helical membrane-spanning segments follow: residues 21-41 (YLSF…LWMG), 73-93 (TMGG…WANL), 94-114 (SNPY…VGFV), 132-152 (WKYF…YAYG), 168-188 (VMPQ…VGTS), 199-219 (GLAI…AWAT), 236-256 (ASEL…FLWF), 263-283 (VFMG…IAVL), 288-308 (LVLV…ILQV), and 338-358 (VIVR…ATLK).

It belongs to the glycosyltransferase 4 family. MraY subfamily. Mg(2+) is required as a cofactor.

The protein resides in the cell inner membrane. It carries out the reaction UDP-N-acetyl-alpha-D-muramoyl-L-alanyl-gamma-D-glutamyl-meso-2,6-diaminopimeloyl-D-alanyl-D-alanine + di-trans,octa-cis-undecaprenyl phosphate = di-trans,octa-cis-undecaprenyl diphospho-N-acetyl-alpha-D-muramoyl-L-alanyl-D-glutamyl-meso-2,6-diaminopimeloyl-D-alanyl-D-alanine + UMP. It functions in the pathway cell wall biogenesis; peptidoglycan biosynthesis. Functionally, catalyzes the initial step of the lipid cycle reactions in the biosynthesis of the cell wall peptidoglycan: transfers peptidoglycan precursor phospho-MurNAc-pentapeptide from UDP-MurNAc-pentapeptide onto the lipid carrier undecaprenyl phosphate, yielding undecaprenyl-pyrophosphoryl-MurNAc-pentapeptide, known as lipid I. This chain is Phospho-N-acetylmuramoyl-pentapeptide-transferase, found in Vibrio vulnificus (strain YJ016).